A 155-amino-acid chain; its full sequence is Acyl-CoA-binding domain-containing protein 3 (155 aa).

In terms of domain architecture, ACB spans 3-88 (LQEDFEEYAE…VKQLQEEAAA (86 aa)). Residues Lys15, 30-34 (YGLYK), Lys56, and Tyr75 contribute to the an acyl-CoA site.

The protein belongs to the ACBP family. Highly expressed in leaves. Expressed at low levels in roots and seeds.

It is found in the cytoplasm. The protein localises to the cytosol. Its function is as follows. Binds medium- and long-chain acyl-CoA esters with high affinity. Can interact in vitro with linolenoyl-CoA. Binds phosphatidic acid (PA) and phosphatidylcholine (PC) in vitro. May play a role in the biosynthesis of phospholipids. This chain is Acyl-CoA-binding domain-containing protein 3, found in Oryza sativa subsp. japonica (Rice).